The chain runs to 467 residues: Plasma alpha-L-fucosidase (467 aa).

Positions 1-28 (MRPQELPRLAFPLLLLLLLLLPPPPCPA) are cleaved as a signal peptide. 2 N-linked (GlcNAc...) asparagine glycosylation sites follow: N171 and N239. At S301 the chain carries Phosphoserine; by FAM20C. N-linked (GlcNAc...) asparagine glycosylation is present at N377.

The protein belongs to the glycosyl hydrolase 29 family. In terms of assembly, homotetramer.

Its subcellular location is the secreted. The enzyme catalyses an alpha-L-fucoside + H2O = L-fucose + an alcohol. Alpha-L-fucosidase is responsible for hydrolyzing the alpha-1,6-linked fucose joined to the reducing-end N-acetylglucosamine of the carbohydrate moieties of glycoproteins. The protein is Plasma alpha-L-fucosidase (FUCA2) of Homo sapiens (Human).